Here is a 485-residue protein sequence, read N- to C-terminus: E-selectin (485 aa).

The first 22 residues, 1-22 (MIVSQYLSALTFVLLLFKESRT), serve as a signal peptide directing secretion. The region spanning 23-140 (WSYHASTEMM…CTKQKLALCY (118 aa)) is the C-type lectin domain. Over 23-430 (WSYHASTEMM…CEAPTVSQTP (408 aa)) the chain is Extracellular. Cystine bridges form between cysteine 41–cysteine 139, cysteine 112–cysteine 131, cysteine 144–cysteine 155, cysteine 149–cysteine 164, cysteine 166–cysteine 175, cysteine 181–cysteine 224, cysteine 194–cysteine 206, cysteine 210–cysteine 237, cysteine 242–cysteine 286, cysteine 255–cysteine 268, cysteine 272–cysteine 299, cysteine 304–cysteine 349, cysteine 335–cysteine 362, cysteine 367–cysteine 408, and cysteine 394–cysteine 421. Residues asparagine 61, asparagine 79, and asparagine 88 are each glycosylated (N-linked (GlcNAc...) asparagine). Positions 102, 104, and 110 each coordinate Ca(2+). Residues 102-110 (EPNNKQSDE), 114-119 (EIYIKR), and 127-129 (NDE) contribute to the a carbohydrate site. Positions 127 and 128 each coordinate Ca(2+). One can recognise an EGF-like domain in the interval 141–176 (KAACNPTPCGSHGECVETINNYTCQCHPGFKGLKCE). Asparagine 161 carries N-linked (GlcNAc...) asparagine glycosylation. 4 consecutive Sushi domains span residues 179-239 (VTCP…KCNV), 240-301 (VKCD…TCKA), 302-364 (VSCA…VCEV), and 365-423 (VRCS…TCEA). Asparagine 203 carries an N-linked (GlcNAc...) asparagine glycan. Asparagine 265 is a glycosylation site (N-linked (GlcNAc...) asparagine). 2 N-linked (GlcNAc...) asparagine glycosylation sites follow: asparagine 312 and asparagine 316. Residues asparagine 379 and asparagine 401 are each glycosylated (N-linked (GlcNAc...) asparagine). A helical transmembrane segment spans residues 431-453 (LAVGLSTAGVSLVTIPSFLFWLL). At 454–485 (KRLQKKAKKFSPASSCSSLKSNGCYSTPSKLI) the chain is on the cytoplasmic side. A disordered region spans residues 466–485 (ASSCSSLKSNGCYSTPSKLI).

This sequence belongs to the selectin/LECAM family. In terms of assembly, interacts with SELPLG/PSGL1 and PODXL2 through the sialyl Lewis X epitope. SELPLG sulfation appears not to be required for this interaction.

The protein resides in the cell membrane. Its function is as follows. Cell-surface glycoprotein having a role in immunoadhesion. Mediates in the adhesion of blood neutrophils in cytokine-activated endothelium through interaction with SELPLG/PSGL1. May have a role in capillary morphogenesis. In Bos taurus (Bovine), this protein is E-selectin (SELE).